A 442-amino-acid polypeptide reads, in one-letter code: Urokinase-type plasminogen activator (442 aa).

The signal sequence occupies residues M1–G20. Residues G29–E65 form the EGF-like domain. 12 disulfide bridges follow: C33–C41, C35–C53, C55–C64, C72–C153, C93–C135, C124–C148, C179–C310, C220–C236, C228–C299, C324–C393, C356–C372, and C383–C411. A binds urokinase plasminogen activator surface receptor region spans residues L36 to F59. A Kringle domain is found at C72 to C153. N-linked (GlcNAc...) asparagine glycosylation is present at N152. Positions S154–K189 are connecting peptide. The 246-residue stretch at I190 to G435 folds into the Peptidase S1 domain. Active-site charge relay system residues include H235 and D286. The Charge relay system role is filled by S387.

It belongs to the peptidase S1 family. In terms of assembly, found in high and low molecular mass forms. Each consists of two chains, A and B. The high molecular mass form contains a long chain A which is cleaved to yield a short chain A. Forms heterodimer with SERPINA5. Binds LRP1B; binding is followed by internalization and degradation. Interacts with MRC2. Interacts with PLAUR. In complex with SERPINE1, interacts with PLAUR/uPAR. Interacts with SORL1 and LRP1, either alone or in complex with SERPINE1; these interactions are abolished in the presence of LRPAP1/RAP. The ternary complex composed of PLAUR-PLAU-PAI1 also interacts with SORLA. In terms of processing, produced as an inactive single-chain protein (pro-uPA or sc-uPA), is processed into the active disulfide-linked two-chain form of PLAU/uPA by a proteolytic event mediated, at least, by TMPRSS4.

It localises to the secreted. The enzyme catalyses Specific cleavage of Arg-|-Val bond in plasminogen to form plasmin.. Its activity is regulated as follows. Inhibited by SERPINA5. Inhibited by SERPINE1. In terms of biological role, specifically cleaves the zymogen plasminogen to form the active enzyme plasmin. This Sus scrofa (Pig) protein is Urokinase-type plasminogen activator (PLAU).